Here is a 482-residue protein sequence, read N- to C-terminus: Uric acid transporter UacT (482 aa).

At M1–K29 the chain is on the cytoplasmic side. A helical transmembrane segment spans residues L30–L50. Topologically, residues M51–A62 are periplasmic. A helical transmembrane segment spans residues I63–I83. Residues G84–R92 lie on the Cytoplasmic side of the membrane. The helical transmembrane segment at L93–N113 threads the bilayer. Residues P114–D115 are Periplasmic-facing. Residues I116–A136 form a helical membrane-spanning segment. Topologically, residues P137 to L142 are cytoplasmic. Residues M143–I163 form a helical membrane-spanning segment. Residues Q164–Q178 are Periplasmic-facing. The helical transmembrane segment at Y179–T199 threads the bilayer. The Cytoplasmic segment spans residues R200 to G204. The helical transmembrane segment at F205–M225 threads the bilayer. Residues N226–T261 are Periplasmic-facing. A helical membrane pass occupies residues A262–V282. The Cytoplasmic portion of the chain corresponds to G283–S337. A helical membrane pass occupies residues G338–P358. Residue Q359 is a topological domain, periplasmic. Residues F360–I380 form a helical membrane-spanning segment. Residues L381–N392 are Cytoplasmic-facing. Residues L393–F413 traverse the membrane as a helical segment. Over S414–Q421 the chain is Periplasmic. Residues P422–F442 form a helical membrane-spanning segment. Residues N443–E482 are Cytoplasmic-facing.

This sequence belongs to the nucleobase:cation symporter-2 (NCS2) (TC 2.A.40) family.

Its subcellular location is the cell inner membrane. Inhibited in the presence of the protonophore carbonyl cyanide m-chlorophenyl hydrazone. In terms of biological role, proton-dependent high-capacity transporter for uric acid. Also shows a low capacity for transport of xanthine at 37 degrees Celsius but not at 25 degrees Celsius. In Escherichia coli (strain K12), this protein is Uric acid transporter UacT (uacT).